We begin with the raw amino-acid sequence, 196 residues long: Urease accessory protein UreE (196 aa).

Residues Arg-150–Asp-196 form a disordered region. Over residues Gly-156–Asp-196 the composition is skewed to basic and acidic residues.

This sequence belongs to the UreE family.

The protein resides in the cytoplasm. In terms of biological role, involved in urease metallocenter assembly. Binds nickel. Probably functions as a nickel donor during metallocenter assembly. The protein is Urease accessory protein UreE of Mesorhizobium japonicum (strain LMG 29417 / CECT 9101 / MAFF 303099) (Mesorhizobium loti (strain MAFF 303099)).